The following is an 88-amino-acid chain: Small ribosomal subunit protein bS20 (88 aa).

The protein belongs to the bacterial ribosomal protein bS20 family.

In terms of biological role, binds directly to 16S ribosomal RNA. This is Small ribosomal subunit protein bS20 from Nitrobacter winogradskyi (strain ATCC 25391 / DSM 10237 / CIP 104748 / NCIMB 11846 / Nb-255).